Consider the following 645-residue polypeptide: TBC1 domain family member 17 (645 aa).

Positions 57-85 are disordered; sequence PTQILFKKDPSRGEPSTSEEEPTFDPGYE. The segment at 217-309 is required for interaction with OPTN; it reads DPYSTTFSSF…PELKNRIFSG (93 aa). Residues 310-520 enclose the Rab-GAP TBC domain; the sequence is GLSPGLRREA…RLWEVLWTGL (211 aa). The disordered stretch occupies residues 596-645; the sequence is QPEEPSSPSPPVSPMPLSPTRAPLPPPLPEEVIPQPDSSLEILPEDEDGA. The segment covering 600-624 has biased composition (pro residues); that stretch reads PSSPSPPVSPMPLSPTRAPLPPPLP. Phosphoserine is present on residues Ser602, Ser604, and Ser608. Thr615 carries the post-translational modification Phosphothreonine.

Interacts with OPTN; this interaction mediates TBC1D17 transient association with Rab8.

It is found in the cytoplasmic vesicle. The protein resides in the autophagosome. Its subcellular location is the cytoplasm. The protein localises to the recycling endosome. In terms of biological role, probable GTPase-activating protein that inhibits RAB8A/B function. Reduces Rab8 recruitment to tubules emanating from the endocytic recycling compartment (ERC) and inhibits Rab8-mediated endocytic trafficking, such as that of transferrin receptor (TfR). Involved in regulation of autophagy. The sequence is that of TBC1 domain family member 17 (Tbc1d17) from Mus musculus (Mouse).